We begin with the raw amino-acid sequence, 347 residues long: Photosystem II assembly protein Ycf48 (347 aa).

The N-terminal stretch at 1–38 (MFAKQIDIHWQKMKGIKFLHWLLGTVLLWVSLSTPALA) is a signal peptide. The short motif at 202-226 (RGSFYSTWEPGQTAWEPHNRTTSRR) is the Arg-rich patch element.

This sequence belongs to the Ycf48 family. In terms of assembly, interacts with the D1 protein (crystallized with PsbA1 or PsbA3), via the latter's C-terminal prepropeptide, may interact with parts of the mature D1 protein as well.

The protein resides in the cellular thylakoid lumen. A factor required for optimal assembly of photosystem II (PSII), acting in the early stages of PSII assembly. Also plays a role in replacement of photodamaged D1 (psbA). Assists YidC in synthesis of chlorophyll-binding proteins. This Thermosynechococcus vestitus (strain NIES-2133 / IAM M-273 / BP-1) protein is Photosystem II assembly protein Ycf48.